Reading from the N-terminus, the 907-residue chain is MALYREGKAAMAADGTVTGTGTKWQSSLSLIRPGATIMFLSSPIQMAVVNKVVSDTEIKAITTNGAVVASTDYAILLSDSLTVDGLAQDVAETLRYYQSQETVIADAVEFFKEFDFESLQNLANQIKADSEASESSAAAAAASESKAKTSEDNAKSSENAAKNSEVAAETTRDQIQQIIDNAGDQSTLVVLAQPDGFDSIGRVSSFAALRNLKPKKSGQHVLLTSYYDGWAAENKMPTGGGEFISSIGTATDDGGYIAAGPGYYWTRVVNNNSFTAEDFGCKTTATPPPNFNVLPAELFDNTAMMQAAFNLAISKSFKLNLSTGTYYFESSDTLRITGPIHIEGRPGTVFYHNPSNKANPKTDAFMNISGCSMGRISSINCFSNSYLGKGINFDRSVGDNRKLVLEHVYVDTFRWGFYVGEPECINQIEFHSCRAQSNYFQGIFIESFKEGQQYGHSAPVHFFNTICNGNGPTSFALGATYKTTKNEYIKVMDSVNDVGCQAYFQGLSNVQYIGGQLSGHGSPRNTSLATITQCNSFIIYGTDLEDINGFTTDGTAITTDNIDTIESNYLKDISGAAIVVSSCLGFKIDSPHIFKINTLSTIKLMNNTYNYEIGGFTPDEALKYNVWDANGLATNRISGVIHPRLVNSQLGINSVAFDNMSNKLDVSSLIHNETSQIIGLIPSTGSNVPHTRIMWSNGAMYSSTDLNNGFRLNYLSNHNEPLTPMHLYNEFSVSEFGGSVTESNALDEIKYIFIQTTYANSGDGRFIIQALDASGSVLSSNWYSPQSFNSTFPISGFVRFDVPTGAKKIRYGFVNSANYTGSLRSHFMSGFAYNKRFFLKIYAVYNDLGRYGQFEPPYSVAIDRFRVGDNTTQMPSIPASSATDVAGVNEVINSLLASLKANGFMSS.

The interval 137-169 (AAAAAASESKAKTSEDNAKSSENAAKNSEVAAE) is disordered. The span at 145 to 155 (SKAKTSEDNAK) shows a compositional bias: basic and acidic residues.

It in the N-terminal section; belongs to the Webervirus depolymerase family. This sequence in the C-terminal section; belongs to the K2-specific depolymerase family. Homotrimer.

Its subcellular location is the virion. Its function is as follows. Functions as a receptor binding protein (RBP) and probably mediates the attachment to the host capsular exopolysaccharides. Displays a depolymerase activity that specifically degrades the K2-type polysaccharides of Klebsiella pneumoniae capsule, which allows the phage to reach the host cell membrane and bind the entry receptor. In Klebsiella (Bacteriophage B1), this protein is Depolymerase, capsule K2-specific.